The chain runs to 372 residues: C-X-C chemokine receptor type 5 (372 aa).

Residues Met-1–Pro-55 lie on the Extracellular side of the membrane. Asn-28 carries an N-linked (GlcNAc...) asparagine glycan. Residues Val-56–Leu-76 traverse the membrane as a helical segment. At Glu-77–Thr-88 the chain is on the cytoplasmic side. The helical transmembrane segment at Phe-89–Ala-109 threads the bilayer. Residues Glu-110–Thr-124 are Extracellular-facing. Cys-122 and Cys-202 are oxidised to a cystine. The chain crosses the membrane as a helical span at residues Val-125–Val-145. Over Asp-146 to His-167 the chain is Cytoplasmic. Residues Ile-168–Ala-188 form a helical membrane-spanning segment. Residues Lys-189–Arg-219 are Extracellular-facing. Asn-196 carries N-linked (GlcNAc...) asparagine glycosylation. A helical membrane pass occupies residues Phe-220–Gly-240. Residues Val-241–Arg-259 lie on the Cytoplasmic side of the membrane. A helical transmembrane segment spans residues Val-260–Phe-280. Over Leu-281 to Ile-304 the chain is Extracellular. The helical transmembrane segment at Thr-305–Ala-325 threads the bilayer. The Cytoplasmic segment spans residues Gly-326 to Phe-372.

The protein belongs to the G-protein coupled receptor 1 family. As to expression, expression in mature B-cells and Burkitt lymphoma cells.

It localises to the cell membrane. In terms of biological role, cytokine receptor that binds to B-lymphocyte chemoattractant (BLC). Involved in B-cell migration into B-cell follicles of spleen and Peyer patches but not into those of mesenteric or peripheral lymph nodes. May have a regulatory function in Burkitt lymphoma (BL) lymphomagenesis and/or B-cell differentiation. The protein is C-X-C chemokine receptor type 5 (CXCR5) of Homo sapiens (Human).